A 105-amino-acid chain; its full sequence is Plastocyanin (105 aa).

The Plastocyanin-like domain maps to 1–105 (ETYTVKLGSD…GMVGKITVAG (105 aa)). The Cu(2+) site is built by His39, Cys89, His92, and Met97.

The protein belongs to the plastocyanin family. Requires Cu(2+) as cofactor.

It is found in the cellular thylakoid membrane. Participates in electron transfer between P700 and the cytochrome b6-f complex in photosystem I. The sequence is that of Plastocyanin (petE) from Anabaena variabilis.